The following is a 145-amino-acid chain: Large ribosomal subunit protein uL13 (145 aa).

The tract at residues 72–91 is disordered; that stretch reads DKMYHRHSNHPGGLKSISAG.

Belongs to the universal ribosomal protein uL13 family. In terms of assembly, part of the 50S ribosomal subunit.

Its function is as follows. This protein is one of the early assembly proteins of the 50S ribosomal subunit, although it is not seen to bind rRNA by itself. It is important during the early stages of 50S assembly. This is Large ribosomal subunit protein uL13 from Staphylococcus epidermidis (strain ATCC 12228 / FDA PCI 1200).